Reading from the N-terminus, the 200-residue chain is BREX protein BrxA (200 aa).

Belongs to the BrxA family.

BREX systems (bacteriophage exclusion) provide immunity against bacteriophage. Part of a type 1 BREX system. This system allows phage adsorption but prevents phage DNA replication, without degradation of the phage DNA. Methylation of bacterial DNA by PglX probably guides self/non-self discrimination. When the brxA-brxB-brxC-pglX and pglZ-brxL operons are transformed into a susceptible B.subtilis strain (BEST7003) they confer resistance to bacteriophages SPbeta, SP16, Zeta, phi3T and SP02 and partial protection to phages SP01 and SP82G (these include lytic and temperate phage). They do not protect against phages phi105, rho10 or rho14. Additionally confers a very slight reduction in efficiency of plasmid transformation. In Bacillus cereus (strain H3081.97), this protein is BREX protein BrxA.